We begin with the raw amino-acid sequence, 348 residues long: Lipoyl synthase, mitochondrial (348 aa).

Residues C105, C110, C116, C136, C140, and C143 each contribute to the [4Fe-4S] cluster site. The Radical SAM core domain occupies 121–341 (ETGTATATIM…RTXXLVSYVL (221 aa)).

It belongs to the radical SAM superfamily. Lipoyl synthase family. The cofactor is [4Fe-4S] cluster.

The protein resides in the mitochondrion. It carries out the reaction [[Fe-S] cluster scaffold protein carrying a second [4Fe-4S](2+) cluster] + N(6)-octanoyl-L-lysyl-[protein] + 2 oxidized [2Fe-2S]-[ferredoxin] + 2 S-adenosyl-L-methionine + 4 H(+) = [[Fe-S] cluster scaffold protein] + N(6)-[(R)-dihydrolipoyl]-L-lysyl-[protein] + 4 Fe(3+) + 2 hydrogen sulfide + 2 5'-deoxyadenosine + 2 L-methionine + 2 reduced [2Fe-2S]-[ferredoxin]. It functions in the pathway protein modification; protein lipoylation via endogenous pathway; protein N(6)-(lipoyl)lysine from octanoyl-[acyl-carrier-protein]: step 2/2. Its function is as follows. Catalyzes the radical-mediated insertion of two sulfur atoms into the C-6 and C-8 positions of the octanoyl moiety bound to the lipoyl domains of lipoate-dependent enzymes, thereby converting the octanoylated domains into lipoylated derivatives. The chain is Lipoyl synthase, mitochondrial (LIP1) from Ricinus communis (Castor bean).